The chain runs to 524 residues: Ribonuclease Y (524 aa).

The chain crosses the membrane as a helical span at residues 3–23 (IVINLFLIIFASVVFFAAGFF). Residues 214-274 (ALSVVHIQSD…LRREHAKLTL (61 aa)) enclose the KH domain. An HD domain is found at 340–432 (LLQHSREVAM…VDAANVISLA (93 aa)).

The protein belongs to the RNase Y family.

It is found in the cell membrane. Endoribonuclease that initiates mRNA decay. The sequence is that of Ribonuclease Y from Chlorobium luteolum (strain DSM 273 / BCRC 81028 / 2530) (Pelodictyon luteolum).